The following is a 444-amino-acid chain: Glutamate--methylamine ligase (444 aa).

In terms of domain architecture, GS beta-grasp spans 14–97; sequence HHVKYVLAQF…LVCDGHVNGK (84 aa). Residues 103–444 enclose the GS catalytic domain; that stretch reads TRVVLKQQIA…WEINRYVQFY (342 aa).

Belongs to the glutamine synthetase family. Type 3 subfamily. Requires Mg(2+) as cofactor.

The enzyme catalyses methylamine + L-glutamate + ATP = N(5)-methyl-L-glutamine + ADP + phosphate + H(+). The catalysed reaction is ethylamine + L-glutamate + ATP = N(5)-ethyl-L-glutamine + ADP + phosphate + H(+). With respect to regulation, formation of theanine is repressed by a high concentration of glutamic acid. In terms of biological role, catalyzes the formation of N(5)-methyl-L-glutamine from glutamate and methylamine. In vitro, can also use ethylamine, hydroxylamine and ammonia, with 75%, 40% and 1% activity compared to methylamine, respectively. This chain is Glutamate--methylamine ligase, found in Methylovorus mays.